The primary structure comprises 535 residues: Dimethylaniline monooxygenase [N-oxide-forming] 2 (535 aa).

FAD is bound by residues 9 to 13 (GAGVS), Glu-32, 40 to 41 (LW), and 61 to 62 (NT). NADP(+) is bound by residues 60–61 (TN) and 195–198 (SAAD). Residue Lys-492 forms a Glycyl lysine isopeptide (Lys-Gly) (interchain with G-Cter in SUMO) linkage. Residues 510–530 (APVSFLIKVLGLLAIVLAFFF) traverse the membrane as a helical segment.

Belongs to the FMO family. FAD is required as a cofactor. It depends on Mg(2+) as a cofactor.

The protein resides in the microsome membrane. It localises to the endoplasmic reticulum membrane. In terms of biological role, catalyzes the oxidative metabolism of numerous xenobiotics, including mainly therapeutic drugs and insecticides that contain a soft nucleophile, most commonly nitrogen and sulfur and participates to their bioactivation. This Rattus norvegicus (Rat) protein is Dimethylaniline monooxygenase [N-oxide-forming] 2.